The primary structure comprises 552 residues: FACT complex subunit POB3 (552 aa).

The span at 190–205 shows a compositional bias: basic and acidic residues; sequence KKEESSNEVVPKKEDG. Disordered stretches follow at residues 190–209 and 484–552; these read KKEESSNEVVPKKEDGAEGE and QTAL…PKVE. The segment covering 490-529 has biased composition (acidic residues); that stretch reads DSDEEDINMGSAGEDDESVDEDFQVSSDNDADEVAEEFDS. The span at 541–552 shows a compositional bias: basic and acidic residues; it reads DEERPSKKPKVE.

This sequence belongs to the SSRP1 family. Forms a stable heterodimer with SPT16. The SPT16-POB3 dimer weakly associates with multiple molecules of NHP6 (NHP6A or NHP6B) to form the FACT (yFACT or SNP) complex. The FACT complex interacts with the CK2 (casein kinase II) complex subunits CKA1, CKA2, CKB1 and CKB2 and the components of the transcription machinery CHD1, CTR9, PAF1 and CDC73. The FACT complex interacts with the PAF1 complex. SPT16 interacts with SAS3 and POL1. Interacts directly with RFA1.

The protein resides in the nucleus. It localises to the chromosome. Component of the FACT complex, a general chromatin factor that acts to reorganize nucleosomes. The FACT complex is involved in multiple processes that require DNA as a template such as mRNA elongation, DNA replication and DNA repair. During transcription elongation the FACT complex acts as a histone chaperone that both destabilizes and restores nucleosomal structure. It facilitates the passage of RNA polymerase II and transcription by promoting the dissociation of one histone H2A-H2B dimer from the nucleosome, then subsequently promotes the reestablishment of the nucleosome following the passage of RNA polymerase II. Transcription elongation is promoted by the repression of transcription initiation from cryptic sites. Also acts in establishing transcription initiation complexes and promotes SPT15/TBP-binding to a TATA box. Together with replication factor-A protein (RPA), FACT may play a role in nucleosome deposition during DNA replication. This Saccharomyces cerevisiae (strain ATCC 204508 / S288c) (Baker's yeast) protein is FACT complex subunit POB3 (POB3).